A 182-amino-acid polypeptide reads, in one-letter code: ATP-dependent protease subunit HslV (182 aa).

The active site involves threonine 9. 3 residues coordinate Na(+): alanine 167, cysteine 170, and threonine 173.

It belongs to the peptidase T1B family. HslV subfamily. In terms of assembly, a double ring-shaped homohexamer of HslV is capped on each side by a ring-shaped HslU homohexamer. The assembly of the HslU/HslV complex is dependent on binding of ATP.

It is found in the cytoplasm. It carries out the reaction ATP-dependent cleavage of peptide bonds with broad specificity.. Its activity is regulated as follows. Allosterically activated by HslU binding. In terms of biological role, protease subunit of a proteasome-like degradation complex believed to be a general protein degrading machinery. This is ATP-dependent protease subunit HslV from Enterococcus faecalis (strain ATCC 700802 / V583).